Consider the following 375-residue polypeptide: Dehydrodolichyl diphosphate synthase complex subunit NUS1 (375 aa).

Residues Met-1–Val-28 are compositionally biased toward basic and acidic residues. Residues Met-1–Val-48 form a disordered region. The helical transmembrane segment at Tyr-97–Tyr-119 threads the bilayer.

This sequence belongs to the UPP synthase family. Forms an active dehydrodolichyl diphosphate synthase complex with either SRT1 or RER2. Requires Mg(2+) as cofactor.

The protein localises to the endoplasmic reticulum membrane. Its subcellular location is the lipid droplet. The protein resides in the nucleus membrane. It catalyses the reaction n isopentenyl diphosphate + (2E,6E)-farnesyl diphosphate = a di-trans,poly-cis-polyprenyl diphosphate + n diphosphate. It participates in protein modification; protein glycosylation. Its function is as follows. With SRT1 or RER2, forms the dehydrodolichyl diphosphate synthase (DDS) complex, an essential component of the dolichol monophosphate (Dol-P) biosynthetic machinery. Adds multiple copies of isopentenyl pyrophosphate (IPP) to farnesyl pyrophosphate (FPP) to produce dehydrodolichyl diphosphate (Dedol-PP), a precursor of dolichol which is utilized as a sugar carrier in protein glycosylation in the endoplasmic reticulum (ER). This chain is Dehydrodolichyl diphosphate synthase complex subunit NUS1 (NUS1), found in Saccharomyces cerevisiae (strain ATCC 204508 / S288c) (Baker's yeast).